Reading from the N-terminus, the 702-residue chain is Palmitoyltransferase AKR1 (702 aa).

A compositionally biased stretch (polar residues) spans 1-40; that stretch reads MSTDAELQTISGLSVASKSAPSTQTEGVTASGKVESTTNA. The interval 1–51 is disordered; that stretch reads MSTDAELQTISGLSVASKSAPSTQTEGVTASGKVESTTNAEEATSDVEEEE. At 1-299 the chain is on the cytoplasmic side; the sequence is MSTDAELQTI…TTNLLCFFTP (299 aa). ANK repeat units follow at residues 49-80, 83-112, 117-147, 150-179, 183-212, and 216-245; these read EEEN…VLDT, DGVT…VVDA, LNGT…PLRS, QGYN…PVDC, NGRT…DVKI, and QGFL…DMYA. 2 helical membrane passes run 300-320 and 321-341; these read FILI…FGII and LTVA…LPSL. Topologically, residues 342–354 are cytoplasmic; it reads YNGHAALLKSPFQ. A helical transmembrane segment spans residues 355–375; that stretch reads AGIFTGSAFWVTVKYLTSVLP. Residues 376-379 lie on the Lumenal side of the membrane; sequence ATFA. The helical transmembrane segment at 380–400 threads the bilayer; that stretch reads SHPILNFFFASIFGLAMYCFF. Topologically, residues 401 to 479 are cytoplasmic; the sequence is RCMSMDPGYI…WNAIGVRNHR (79 aa). Residues 436–486 form the DHHC domain; the sequence is HFCFVTYVRKPLRSKFCRQSKRVVARFDHFCPWVWNAIGVRNHRMFVLYVL. Cys466 functions as the S-palmitoyl cysteine intermediate in the catalytic mechanism. The chain crosses the membrane as a helical span at residues 480-500; the sequence is MFVLYVLFLQIGIPLWLALNS. At 501–518 the chain is on the lumenal side; the sequence is AYFGELLEIKRWDPLEFY. A helical transmembrane segment spans residues 519 to 539; it reads LVIWISLQLIWITFLSFVQIF. Residues 540 to 702 are Cytoplasmic-facing; sequence QICRSLTTSE…GEALLAESQV (163 aa). A disordered region spans residues 679–702; that stretch reads PNQQQTNNRSTREDGEALLAESQV.

The protein belongs to the DHHC palmitoyltransferase family. AKR/ZDHHC17 subfamily.

The protein resides in the early endosome membrane. Its subcellular location is the golgi apparatus membrane. The catalysed reaction is L-cysteinyl-[protein] + hexadecanoyl-CoA = S-hexadecanoyl-L-cysteinyl-[protein] + CoA. In terms of biological role, palmitoyltransferase specific for casein kinase 1. The polypeptide is Palmitoyltransferase AKR1 (AKR1) (Yarrowia lipolytica (strain CLIB 122 / E 150) (Yeast)).